The primary structure comprises 291 residues: Beta-lactamase CTX-M-97 (291 aa).

Positions 1–28 (MMTQSIGRSMLTVMATLPLLFSSATLHA) are cleaved as a signal peptide. Ser73 acts as the Acyl-ester intermediate in catalysis. 237–239 (KTG) lines the substrate pocket.

Belongs to the class-A beta-lactamase family.

The catalysed reaction is a beta-lactam + H2O = a substituted beta-amino acid. Its function is as follows. Is probably capable of hydrolyzing cephalosporins such as ceftriaxone and ceftazidime, thus conferring resistance to these antibiotics. The sequence is that of Beta-lactamase CTX-M-97 (bla) from Escherichia coli.